The following is a 1050-amino-acid chain: Probable efflux pump membrane transporter TtgB (1050 aa).

Transmembrane regions (helical) follow at residues 10–30 (IFAW…ILKL), 339–359 (GVIH…YLFL), 370–390 (MTVP…GFSI), 393–413 (LTMF…IVVV), 440–460 (GALV…AFFG), 472–492 (ITIV…TPAL), 539–559 (VPFL…FARI), 871–891 (MPAL…ALYE), 893–913 (WSIP…ALIA), 923–943 (VYFL…AILI), 972–992 (IIMT…ASGA), and 1004–1024 (VIGG…LFFV).

Belongs to the resistance-nodulation-cell division (RND) (TC 2.A.6) family.

It localises to the cell inner membrane. Functionally, probable membrane transporter component of the TtgABC efflux pump with unknown specificity. This chain is Probable efflux pump membrane transporter TtgB (ttgB), found in Pseudomonas putida (strain ATCC 47054 / DSM 6125 / CFBP 8728 / NCIMB 11950 / KT2440).